We begin with the raw amino-acid sequence, 790 residues long: Lysine biosynthesis regulatory protein LYS14 (790 aa).

2 disordered regions span residues 1–50 and 72–157; these read MFES…SCFE and FNHK…YSRN. Positions 35–47 are enriched in low complexity; it reads SGSSFTNSGTSTS. Composition is skewed to polar residues over residues 75–113 and 120–142; these read KQMT…SEQD and TISQ…TSTV. Positions 159–186 form a DNA-binding region, zn(2)-C6 fungal-type; that stretch reads CSECKRRRMKCDETKPTCWQCARLNRQC. The segment at 195-258 is disordered; it reads KKRRTSNAQR…PKPITDNGKN (64 aa). Basic residues predominate over residues 222 to 239; the sequence is ARKRQHSSCKAEKKKKVR.

It is found in the nucleus. In terms of biological role, activates the transcription of lysine biosynthesis genes. This activation is dependent on the inducer alpha-aminoadipate semialdehyde and repressed by lysine. In Saccharomyces cerevisiae (strain ATCC 204508 / S288c) (Baker's yeast), this protein is Lysine biosynthesis regulatory protein LYS14 (LYS14).